The following is a 356-amino-acid chain: Carminomycin 4-O-methyltransferase DauK (356 aa).

R153 contributes to the S-adenosyl-L-methionine binding site. D163 is a substrate binding site. Residues G187, E210, 237–238 (DF), and S252 each bind S-adenosyl-L-methionine. Positions 257 and 303 each coordinate substrate.

This sequence belongs to the class I-like SAM-binding methyltransferase superfamily. Cation-independent O-methyltransferase family. As to quaternary structure, homodimer and homotetramer in equilibrium.

The catalysed reaction is carminomycin + S-adenosyl-L-methionine = daunorubicin + S-adenosyl-L-homocysteine + H(+). Its pathway is antibiotic biosynthesis; daunorubicin biosynthesis. It functions in the pathway antibiotic biosynthesis; carminomycin biosynthesis. Its activity is regulated as follows. Strongly inhibited by S-adenosyl-L-homocysteine and weakly by adenine and methionine. Functionally, involved in the biosynthesis of the anthracyclines carminomycin and daunorubicin (daunomycin) which are aromatic polyketide antibiotics that exhibit high cytotoxicity and are widely applied in the chemotherapy of a variety of cancers. In vivo, catalyzes the transfer of a methyl group from S-adenosyl-L-methionine to the 4-O-position of carminomycin to form daunorubicin. In vitro, it also methylates the anthracyclines rhodomycin D (10-carbomethoxy-13-deoxycarminomycin), 10-carboxy-13-deoxycarminomycin, 13-deoxy-carminomycin and 13-dihydrocarminomycin at the 4-hydroxyl position. In Streptomyces sp. (strain C5), this protein is Carminomycin 4-O-methyltransferase DauK (dauK).